Reading from the N-terminus, the 326-residue chain is MAFTPFPPRQPTASARLPLTLMTLDDWALATITGADSEKYMQGQVTADVSQMTEDQHLQAAHCDAKGKMWSNLRLFRDGDGFAWIERRSVREPQLTELKKYAVFSKVTIAPDDERVLLGVAGFQARAALANLFSELPSKEKQVVREGATTLLWFEHPAERFLIVTDEATANMLTDKLRGEAELNNSQQWLALNIEAGFPVIDAANSGQFIPQATNLQALGGISFKKGCYTGQEMVARAKFRGANKRALWLLAGSASRLPEAGEDLELRMGENWRRTGTVLAAVKLEDGQVVVQVVMNNDMEPDSIFRVRDDANTLHIEPLPYSLEE.

2 residues coordinate folate: tryptophan 27 and tryptophan 189.

It belongs to the tRNA-modifying YgfZ family.

It localises to the cytoplasm. Its function is as follows. Folate-binding protein involved in regulating the level of ATP-DnaA and in the modification of some tRNAs. It is probably a key factor in regulatory networks that act via tRNA modification, such as initiation of chromosomal replication. The sequence is that of tRNA-modifying protein YgfZ from Shigella dysenteriae serotype 1 (strain Sd197).